Here is a 740-residue protein sequence, read N- to C-terminus: Elongation factor 2 (740 aa).

Residues 23–264 (AQIRNAGTLA…MIIEHVPPPN (242 aa)) enclose the tr-type G domain. GTP contacts are provided by residues 32-39 (AHVDHGKT), 98-102 (DTPGH), and 152-155 (NKID). His-605 is modified (diphthamide).

Belongs to the TRAFAC class translation factor GTPase superfamily. Classic translation factor GTPase family. EF-G/EF-2 subfamily.

Its subcellular location is the cytoplasm. Catalyzes the GTP-dependent ribosomal translocation step during translation elongation. During this step, the ribosome changes from the pre-translocational (PRE) to the post-translocational (POST) state as the newly formed A-site-bound peptidyl-tRNA and P-site-bound deacylated tRNA move to the P and E sites, respectively. Catalyzes the coordinated movement of the two tRNA molecules, the mRNA and conformational changes in the ribosome. The polypeptide is Elongation factor 2 (Pyrobaculum neutrophilum (strain DSM 2338 / JCM 9278 / NBRC 100436 / V24Sta) (Thermoproteus neutrophilus)).